A 361-amino-acid polypeptide reads, in one-letter code: Tryptophan--tRNA ligase, mitochondrial (361 aa).

Residues 1 to 16 constitute a mitochondrion transit peptide; that stretch reads MAKLPKITSLLPHSRV. ATP is bound by residues glutamine 21 and 27–30; that span reads HIGN. The 'HIGH' region signature appears at 22-30; that stretch reads PTGIPHIGN. Aspartate 165 is an L-tryptophan binding site. Residues 177–179, 225–229, and lysine 228 contribute to the ATP site; these read GKD and KMSKS. Residues 225-229 carry the 'KMSKS' region motif; that stretch reads KMSKS.

The protein belongs to the class-I aminoacyl-tRNA synthetase family. In terms of assembly, homodimer.

It is found in the mitochondrion matrix. It carries out the reaction tRNA(Trp) + L-tryptophan + ATP = L-tryptophyl-tRNA(Trp) + AMP + diphosphate + H(+). This Schizosaccharomyces pombe (strain 972 / ATCC 24843) (Fission yeast) protein is Tryptophan--tRNA ligase, mitochondrial.